Here is a 44-residue protein sequence, read N- to C-terminus: MKMTFQPKKRQRAKVHGFRQRMKTAGGRKVIAARRLKGRKKLSA.

The segment at 1–26 is disordered; it reads MKMTFQPKKRQRAKVHGFRQRMKTAG. Positions 7-22 are enriched in basic residues; that stretch reads PKKRQRAKVHGFRQRM.

The protein belongs to the bacterial ribosomal protein bL34 family.

This Agathobacter rectalis (strain ATCC 33656 / DSM 3377 / JCM 17463 / KCTC 5835 / VPI 0990) (Eubacterium rectale) protein is Large ribosomal subunit protein bL34.